An 857-amino-acid chain; its full sequence is Protein dalmatian (857 aa).

2 disordered regions span residues 1–50 (MVRT…KLSI) and 146–194 (VQKS…FFHR). Composition is skewed to polar residues over residues 146-156 (VQKSTQPQNIK) and 165-176 (SPCQQRIRSKSP). Phosphoserine is present on residues Ser173, Ser175, Ser184, and Ser222. Residues 251 to 271 (GKPRAKRTAKKVRPVGNRRKV) are compositionally biased toward basic residues. Residues 251–281 (GKPRAKRTAKKVRPVGNRRKVSTKDNEPEPV) form a disordered region. At Ser405 the chain carries Phosphoserine. Disordered stretches follow at residues 470–514 (SICP…NAEN) and 737–830 (PPRP…RDIE). The span at 771-781 (KQPRRTYVKER) shows a compositional bias: basic and acidic residues. Positions 797 to 806 (SESEDEDEQD) are enriched in acidic residues. Residues 807–816 (SHDKSLDSPE) are compositionally biased toward basic and acidic residues. A compositionally biased stretch (basic residues) spans 817 to 826 (KKRHHVKRPR).

The protein resides in the nucleus. The protein localises to the chromosome. Functionally, regulator of sister chromatid cohesion in mitosis. Probably involved in development of the central nervous system. The sequence is that of Protein dalmatian (dmt) from Drosophila melanogaster (Fruit fly).